The chain runs to 264 residues: Orotidine 5'-phosphate decarboxylase (264 aa).

Substrate is bound by residues Asp40, 62-64, 93-102, Tyr214, and Arg233; these read KTH and DRKFADIGNT. Lys95 acts as the Proton donor in catalysis.

The protein belongs to the OMP decarboxylase family.

It carries out the reaction orotidine 5'-phosphate + H(+) = UMP + CO2. It participates in pyrimidine metabolism; UMP biosynthesis via de novo pathway; UMP from orotate: step 2/2. This Schizosaccharomyces pombe (strain 972 / ATCC 24843) (Fission yeast) protein is Orotidine 5'-phosphate decarboxylase (ura4).